The chain runs to 291 residues: Probable 2-(5''-triphosphoribosyl)-3'-dephosphocoenzyme-A synthase (291 aa).

Belongs to the CitG/MdcB family.

The catalysed reaction is 3'-dephospho-CoA + ATP = 2'-(5''-triphospho-alpha-D-ribosyl)-3'-dephospho-CoA + adenine. In terms of biological role, involved in the formation of 2-(5''-phosphoribosyl)-3'-dephosphocoenzyme-A, the prosthetic group of the acyl-carrier protein of the malonate decarboxylase. This is Probable 2-(5''-triphosphoribosyl)-3'-dephosphocoenzyme-A synthase from Pseudomonas syringae pv. tomato (strain ATCC BAA-871 / DC3000).